Reading from the N-terminus, the 329-residue chain is PDZ and LIM domain protein 1 (329 aa).

Threonine 2 is subject to N-acetylthreonine. In terms of domain architecture, PDZ spans 3 to 85 (TQQIDLQGPG…NLTLTVARSE (83 aa)). 2 positions are modified to phosphoserine: serine 90 and serine 130. Tyrosine 144 bears the Phosphotyrosine mark. In terms of domain architecture, LIM zinc-binding spans 258-317 (PMCDKCGTGIVGVFVKLRDRHRHPECYVCTDCGTNLKQKGHFFVEDQIYCEKHARERVTP). Positions 260, 263, 280, 283, 286, 289, 307, and 310 each coordinate Zn(2+). Threonine 316 bears the Phosphothreonine mark. Residue tyrosine 321 is modified to Phosphotyrosine.

As to quaternary structure, interacts with ACTN1, ACTN2 and ACTN4. Interacts with PDLIM4. As to expression, strongly expressed in the heart and skeletal muscle, moderately expressed in the spleen, small intestine, colon, placenta, and lung. A lower level expression is seen in liver, thymus, kidney, prostate and pancreas and is not found in the brain, testis, ovary, and peripheral blood leukocytes.

The protein resides in the cytoplasm. It localises to the cytoskeleton. It is found in the myofibril. Its subcellular location is the sarcomere. The protein localises to the z line. In terms of biological role, cytoskeletal protein that may act as an adapter that brings other proteins (like kinases) to the cytoskeleton. Involved in assembly, disassembly and directioning of stress fibers in fibroblasts. Required for the localization of ACTN1 and PALLD to stress fibers. Required for cell migration and in maintaining cell polarity of fibroblasts. The chain is PDZ and LIM domain protein 1 (PDLIM1) from Homo sapiens (Human).